The sequence spans 140 residues: Holo-[acyl-carrier-protein] synthase (140 aa).

Mg(2+)-binding residues include D7 and E58.

This sequence belongs to the P-Pant transferase superfamily. AcpS family. The cofactor is Mg(2+).

It is found in the cytoplasm. It carries out the reaction apo-[ACP] + CoA = holo-[ACP] + adenosine 3',5'-bisphosphate + H(+). Transfers the 4'-phosphopantetheine moiety from coenzyme A to a Ser of acyl-carrier-protein. This Chloroflexus aggregans (strain MD-66 / DSM 9485) protein is Holo-[acyl-carrier-protein] synthase.